The primary structure comprises 673 residues: Gametogenetin (673 aa).

Positions 1 to 599 are disordered; it reads MGNVQSEPSA…TSTAGASNKG (599 aa). Over residues 14-30 the composition is skewed to basic and acidic residues; it reads SRKEQASDRASDSRRTP. Residues 70-83 are compositionally biased toward low complexity; that stretch reads ASSSPLPLTLELPS. The tract at residues 125–506 is interaction with GGNBP1; that stretch reads RGLLEASHRG…APTPPSTLSP (382 aa). The segment covering 161–178 has biased composition (pro residues); sequence PAPPPTPLEPRKQLPPAP. The span at 192 to 202 shows a compositional bias: polar residues; sequence LASSATSPTES. Residues 257-268 are compositionally biased toward low complexity; sequence SASGPLAAKASP. The residue at position 399 (serine 399) is a Phosphoserine. The span at 413-424 shows a compositional bias: low complexity; that stretch reads PRRPTPALLAPP. Over residues 438–475 the composition is skewed to pro residues; that stretch reads RPVPPSPQQIPPLPPPPPTPPATPPPAPPPTPQPPALP. Residues 504–531 show a composition bias toward low complexity; sequence LSPTAAADQVPAATPATVTSQVPATATA. The interactions with ZNF403/GGNBP2 and OAZ3 stretch occupies residues 511–673; it reads DQVPAATPAT…HYDLQATHST (163 aa). Residues 542–551 are compositionally biased toward basic residues; sequence TRTRRNKGPR.

Isoform 1 and isoform 3 interact with FANCL. Isoform 1 interacts with GGNBP1, ZNF403/GGNBP2 and OAZ3. Isoform 2 interacts with GGNBP1. In terms of tissue distribution, testis-specific. Specifically expressed in the germ cells and not in the somatic, Sertoli, or Leydig cells. In adult testis, expression starts in stage VIII pachytene spermatocytes, increases in stage IX and X pachytene spermatocytes, and culminates in stage XI diplotene spermatocytes and the meiotic cells in stage XII. Expression decreases slightly in step 1-3 spermatids, further decreases in step 4-11 spermatids, and is no longer detectable in step 12 spermatids and beyond. Isoform 2 is mainly expressed in testis.

The protein localises to the cytoplasm. It is found in the perinuclear region. It localises to the cytoplasmic vesicle. The protein resides in the nucleus. Its subcellular location is the nucleolus. In terms of biological role, may be involved in spermatogenesis. This chain is Gametogenetin (Ggn), found in Mus musculus (Mouse).